Here is a 292-residue protein sequence, read N- to C-terminus: Small ribosomal subunit biogenesis GTPase RsgA (292 aa).

The 159-residue stretch at 65–223 folds into the CP-type G domain; the sequence is KTELIRPTVA…VVDTPGFSSL (159 aa). GTP contacts are provided by residues 114–117 and 165–173; these read NKLD and GPSGVGKST. Residues C247, C252, H254, and C260 each coordinate Zn(2+).

The protein belongs to the TRAFAC class YlqF/YawG GTPase family. RsgA subfamily. Monomer. Associates with 30S ribosomal subunit, binds 16S rRNA. Zn(2+) serves as cofactor.

The protein localises to the cytoplasm. In terms of biological role, one of several proteins that assist in the late maturation steps of the functional core of the 30S ribosomal subunit. Helps release RbfA from mature subunits. May play a role in the assembly of ribosomal proteins into the subunit. Circularly permuted GTPase that catalyzes slow GTP hydrolysis, GTPase activity is stimulated by the 30S ribosomal subunit. The polypeptide is Small ribosomal subunit biogenesis GTPase RsgA (Alkaliphilus metalliredigens (strain QYMF)).